A 230-amino-acid chain; its full sequence is Ion-translocating oxidoreductase complex subunit E (230 aa).

The next 6 membrane-spanning stretches (helical) occupy residues 18 to 38, 39 to 59, 63 to 83, 86 to 106, 125 to 145, and 182 to 202; these read ALVQLLGMCPLLAVTSTATNA, LGLGLATTLVLTLTNLTISAL, TPAEIRIPIYVMIIASVVSAV, LINAYAFGLYQSLGIFIPLIV, ALSALDGFSIGMGATGAMFVL, and PFLLAMLPPGAFIGLGLMLAV.

It belongs to the NqrDE/RnfAE family. The complex is composed of six subunits: RnfA, RnfB, RnfC, RnfD, RnfE and RnfG.

Its subcellular location is the cell inner membrane. Functionally, part of a membrane-bound complex that couples electron transfer with translocation of ions across the membrane. The chain is Ion-translocating oxidoreductase complex subunit E from Citrobacter koseri (strain ATCC BAA-895 / CDC 4225-83 / SGSC4696).